Consider the following 168-residue polypeptide: Ribosome maturation factor RimM (168 aa).

One can recognise a PRC barrel domain in the interval 96–168; the sequence is EDEYFITDLI…VMIVRLLEGL (73 aa).

Belongs to the RimM family. Binds ribosomal protein uS19.

It localises to the cytoplasm. An accessory protein needed during the final step in the assembly of 30S ribosomal subunit, possibly for assembly of the head region. Essential for efficient processing of 16S rRNA. May be needed both before and after RbfA during the maturation of 16S rRNA. It has affinity for free ribosomal 30S subunits but not for 70S ribosomes. The polypeptide is Ribosome maturation factor RimM (Caldanaerobacter subterraneus subsp. tengcongensis (strain DSM 15242 / JCM 11007 / NBRC 100824 / MB4) (Thermoanaerobacter tengcongensis)).